Consider the following 247-residue polypeptide: Anionic trypsin (247 aa).

A signal peptide spans 1-15; the sequence is MHPLLILAFVGAAVA. The propeptide at 16–23 is activation peptide; the sequence is FPSDDDDK. In terms of domain architecture, Peptidase S1 spans 24-244; that stretch reads IVGGYTCAEN…YVDWIQETIA (221 aa). 6 cysteine pairs are disulfide-bonded: Cys30-Cys160, Cys48-Cys64, Cys132-Cys233, Cys139-Cys206, Cys171-Cys185, and Cys196-Cys220. The active-site Charge relay system is His63. 4 residues coordinate Ca(2+): Glu75, Asn77, Val80, and Glu85. The Charge relay system role is filled by Asp107. Ser200 functions as the Charge relay system in the catalytic mechanism.

The protein belongs to the peptidase S1 family. The cofactor is Ca(2+). Not sulfated on tyrosine residue(s).

It localises to the secreted. The protein localises to the extracellular space. It catalyses the reaction Preferential cleavage: Arg-|-Xaa, Lys-|-Xaa.. The sequence is that of Anionic trypsin from Bos taurus (Bovine).